The sequence spans 241 residues: ATP synthase subunit a (241 aa).

The next 5 helical transmembrane spans lie at 30-50, 91-111, 128-148, 193-213, and 214-234; these read GQVF…ISLG, FIGT…LIPW, INTT…AGLS, LVVG…VMFL, and GLFT…YYIG.

It belongs to the ATPase A chain family. As to quaternary structure, F-type ATPases have 2 components, CF(1) - the catalytic core - and CF(0) - the membrane proton channel. CF(1) has five subunits: alpha(3), beta(3), gamma(1), delta(1), epsilon(1). CF(0) has four main subunits: a, b, b' and c.

It localises to the cellular thylakoid membrane. Key component of the proton channel; it plays a direct role in the translocation of protons across the membrane. The chain is ATP synthase subunit a from Prochlorococcus marinus (strain MIT 9312).